Reading from the N-terminus, the 730-residue chain is Catalase-peroxidase (730 aa).

Over residues 1–11 (MDAKTDDKDAG) the composition is skewed to basic and acidic residues. The first 21 residues, 1-21 (MDAKTDDKDAGKCPFSSGSHA), serve as a signal peptide directing secretion. The segment at 1 to 24 (MDAKTDDKDAGKCPFSSGSHAHRN) is disordered. A cross-link (tryptophyl-tyrosyl-methioninium (Trp-Tyr) (with M-244)) is located at residues 96 to 218 (WHSAGTYRIS…LGAVQMGLIY (123 aa)). His-97 (proton acceptor) is an active-site residue. Residues 218–244 (YVNPEGPNGNPDPVGSAKDIRETFYRM) constitute a cross-link (tryptophyl-tyrosyl-methioninium (Tyr-Met) (with W-96)). His-259 contributes to the heme b binding site.

It belongs to the peroxidase family. Peroxidase/catalase subfamily. In terms of assembly, homodimer or homotetramer. Requires heme b as cofactor. Formation of the three residue Trp-Tyr-Met cross-link is important for the catalase, but not the peroxidase activity of the enzyme.

The catalysed reaction is H2O2 + AH2 = A + 2 H2O. It carries out the reaction 2 H2O2 = O2 + 2 H2O. In terms of biological role, bifunctional enzyme with both catalase and broad-spectrum peroxidase activity. This Rhodopseudomonas palustris (strain BisA53) protein is Catalase-peroxidase.